Reading from the N-terminus, the 444-residue chain is MREIVLTQTGQCGNQIGAKFWEVISDEHAIDSAGTYHGDSHLQLERINVHHHEASGGRYVPRAVLVDLEPGTMDSVHSGPFGQVFRPDNFISGQCGAGNNWAKGRYTEGAELTESVMDVVRKEAESCDCLQGFQLTHSLGGGTGSGMGTLLISKIREEYPDRIINTFSILPSPKVSDTVVEPYNATLSVHQLIENADETFCIDNEALYDICSRTLKLPTPTYGDLNHLVSATMSGVTTCLRFPGQLNADLRKLAVNMVPFPRLHFFMPGFAPLTSRGSQQYRALTVAELTQQMFDAKNMMAACDPRHGCYLTVAAIFRGRMPMREVDEQMFNIQDKNSSYFADWFPDNVKTAVCDIPPRGLKMSATFIGNNAAIQELFTCVSEQFTAMFRRKAFLHWYTGEGMDEMEFTEAESNMNDLVSEYQQYQDATAEEEEDEEYAEEEVA.

Positions 1 to 4 match the MREI motif motif; it reads MREI. Gln-11, Glu-69, Ser-138, Gly-142, Thr-143, and Gly-144 together coordinate GTP. Glu-69 serves as a coordination point for Mg(2+). Ser-172 bears the Phosphoserine; by CDK1 mark. Residues Asn-204 and Asn-226 each contribute to the GTP site. A disordered region spans residues 421–444; the sequence is EYQQYQDATAEEEEDEEYAEEEVA. The segment covering 429–444 has biased composition (acidic residues); the sequence is TAEEEEDEEYAEEEVA. 5-glutamyl polyglutamate is present on Glu-436.

It belongs to the tubulin family. As to quaternary structure, dimer of alpha and beta chains. A typical microtubule is a hollow water-filled tube with an outer diameter of 25 nm and an inner diameter of 15 nM. Alpha-beta heterodimers associate head-to-tail to form protofilaments running lengthwise along the microtubule wall with the beta-tubulin subunit facing the microtubule plus end conferring a structural polarity. Microtubules usually have 13 protofilaments but different protofilament numbers can be found in some organisms and specialized cells. Requires Mg(2+) as cofactor. In terms of processing, some glutamate residues at the C-terminus are polyglutamylated, resulting in polyglutamate chains on the gamma-carboxyl group. Polyglutamylation plays a key role in microtubule severing by spastin (SPAST). SPAST preferentially recognizes and acts on microtubules decorated with short polyglutamate tails: severing activity by SPAST increases as the number of glutamates per tubulin rises from one to eight, but decreases beyond this glutamylation threshold. Glutamylation is also involved in cilia motility. Some glutamate residues at the C-terminus are monoglycylated but not polyglycylated due to the absence of functional TTLL10 in human. Monoglycylation is mainly limited to tubulin incorporated into cilia and flagella axonemes, which is required for their stability and maintenance. Flagella glycylation controls sperm motility. Both polyglutamylation and monoglycylation can coexist on the same protein on adjacent residues, and lowering glycylation levels increases polyglutamylation, and reciprocally. Post-translationally, phosphorylated on Ser-172 by CDK1 during the cell cycle, from metaphase to telophase, but not in interphase. This phosphorylation inhibits tubulin incorporation into microtubules.

It is found in the cytoplasm. Its subcellular location is the cytoskeleton. Its function is as follows. Tubulin is the major constituent of microtubules, a cylinder consisting of laterally associated linear protofilaments composed of alpha- and beta-tubulin heterodimers. Microtubules grow by the addition of GTP-tubulin dimers to the microtubule end, where a stabilizing cap forms. Below the cap, tubulin dimers are in GDP-bound state, owing to GTPase activity of alpha-tubulin. The chain is Tubulin beta 8B from Homo sapiens (Human).